The following is a 241-amino-acid chain: Ribonuclease PH (241 aa).

Residues Arg-86 and 124-126 (GTR) contribute to the phosphate site.

This sequence belongs to the RNase PH family. In terms of assembly, homohexameric ring arranged as a trimer of dimers.

It carries out the reaction tRNA(n+1) + phosphate = tRNA(n) + a ribonucleoside 5'-diphosphate. Functionally, phosphorolytic 3'-5' exoribonuclease that plays an important role in tRNA 3'-end maturation. Removes nucleotide residues following the 3'-CCA terminus of tRNAs; can also add nucleotides to the ends of RNA molecules by using nucleoside diphosphates as substrates, but this may not be physiologically important. Probably plays a role in initiation of 16S rRNA degradation (leading to ribosome degradation) during starvation. This Hamiltonella defensa subsp. Acyrthosiphon pisum (strain 5AT) protein is Ribonuclease PH.